The sequence spans 488 residues: Bile acid receptor (488 aa).

Lys133 is covalently cross-linked (Glycyl lysine isopeptide (Lys-Gly) (interchain with G-Cter in SUMO1)). The segment at residues 135–210 (DELCVVCGDR…MGMLAECMYT (76 aa)) is a DNA-binding region (nuclear receptor). The NR C4-type zinc finger occupies 138-158 (CVVCGDRASGYHYNALTCEGC). Phosphoserine; by PKC/PRKCA is present on residues Ser146 and Ser165. The residue at position 168 (Lys168) is an N6-acetyllysine; by EP300. Residues 174–198 (CKNGGNCVMDMYMRRKCQECRLRKC) form an NR C4-type zinc finger. Position 221 is an N6-methyllysine; by SETD7 (Lys221). Lys228 is subject to N6-acetyllysine; by EP300. The NR LBD domain occupies 264 to 488 (DQQTLLDYIM…PLLCEIWDVQ (225 aa)). Lys291 participates in a covalent cross-link: Glycyl lysine isopeptide (Lys-Gly) (interchain with G-Cter in SUMO1). Chenodeoxycholate contacts are provided by Arg347, Tyr377, and Tyr385. Thr458 is subject to Phosphothreonine; by PKC/PRKCZ. Chenodeoxycholate is bound at residue His463.

It belongs to the nuclear hormone receptor family. NR1 subfamily. In terms of assembly, heterodimer with RXRA; the heterodimerization enhances the binding affinity for LXXLL motifs from coactivators. Binds DNA predominantly as a heterodimer with RXRA. After activation by agonist binding interacts with coactivators. Interacts with PPARGC1A, SMARCA4 and EP300. Interacts with NCOA1, NCOA2, CARM1, SETD7, PRMT1, GPS2, SMARCA4 and MED1. Interacts with XRCC5 and XRCC6; decreasing NR1H4/FXR transactivation activity towards ABCB11/BSEP. Interacts with PAGR1 and NCOA6; indicative for an association with an MLL2/MLL3 complex (ASCOM). Interacts with NR5A2. In terms of processing, acetylated by EP300. Lys-228 as is the major acetylation site for EP300; the dynamicly regulated acetylation inhibits heterodimerization with RXRA and transactivation activity. Deacetylated by SIRT1. Elevated acetylation levels are found in metabolic disease states (mouse models of obesity and type II diabetes). Methylation may increase transactivation of target genes. Post-translationally, phosphorylation by PKC/PRKCA increases transactivation activity by promoting association with PPARGC1A. In terms of processing, sumoylated upon ligand binding. Expressed in liver and kidney. Expressed in pancreatic beta cells and macrophages. Expressed in the villus epithelium in adult ileum, with highest expression in the intervillus regions. Expression in colon is reduced by inflammation.

Its subcellular location is the nucleus. Ligand-activated transcription factor. Receptor for bile acids (BAs) such as chenodeoxycholic acid (CDCA), lithocholic acid, deoxycholic acid (DCA) and allocholic acid (ACA). Plays a essential role in BA homeostasis through the regulation of genes involved in BA synthesis, conjugation and enterohepatic circulation. Also regulates lipid and glucose homeostasis and is involved in innate immune response. The FXR-RXR heterodimer binds predominantly to farnesoid X receptor response elements (FXREs) containing two inverted repeats of the consensus sequence 5'-AGGTCA-3' in which the monomers are spaced by 1 nucleotide (IR-1) but also to tandem repeat DR1 sites with lower affinity, and can be activated by either FXR or RXR-specific ligands. It is proposed that monomeric nuclear receptors such as NR5A2/LRH-1 bound to coregulatory nuclear responsive element (NRE) halfsites located in close proximity to FXREs modulate transcriptional activity. In the liver activates transcription of the corepressor NR0B2 thereby indirectly inhibiting CYP7A1 and CYP8B1 (involved in BA synthesis) implicating at least in part histone demethylase KDM1A resulting in epigenomic repression, and SLC10A1/NTCP (involved in hepatic uptake of conjugated BAs). Activates transcription of the repressor MAFG (involved in regulation of BA synthesis). Activates transcription of SLC27A5/BACS and BAAT (involved in BA conjugation), ABCB11/BSEP (involved in bile salt export) by directly recruiting histone methyltransferase CARM1, and ABCC2/MRP2 (involved in secretion of conjugated BAs) and ABCB4 (involved in secretion of phosphatidylcholine in the small intestine). In ileal enterocytes activates FABP6/IBABP (involved in cytosolic transport), SLC51A/OSTA and SLC51B/OSTB (involved in secretion of conjugated BAs to the portal blood), and repressor NR0B2/SHP thereby indirectly inhibiting SLC10A2/ASBT (involved in BA uptake). In the intestine activates FGF15 expression and secretion leading to hepatic CYP7A1 repression; the function also involves the coordinated induction of hepatic KLB/beta-klotho expression. Transcriptional activation of FABP6/IBAP and SCD1 but not of ABCB11 is isoform-specific. Regulates transcription of liver UGT2B4 and SULT2A1 involved in BA detoxification; binding to the UGT2B4 promoter seems to imply a monomeric transactivation independent of RXRA. Modulates lipid homeostasis by activating liver NR0B2/SHP-mediated repression of SREBF1 isoform SREBP-1C (involved in de novo lipogenesis), expression of PLTP (involved in HDL formation), SCARB1 (involved in HDL hepatic uptake), APOE, APOC1, APOC4, VLDLR and SDC1 (involved in the hepatic uptake of LDL and IDL remnants), and inhibiting expression of MTTP (involved in VLDL assembly). Increases expression of APOC2 (promoting lipoprotein lipase activity implicated in triglyceride clearance). Transrepresses APOA1 probably involving a monomeric competition with NR2A1 for binding to a DR1 element. Also reduces triglyceride clearance by inhibiting expression of ANGPTL3 and APOC3 (both involved in inhibition of lipoprotein lipase). Involved in glucose homeostasis by modulating hepatic gluconeogenesis through activation of NR0B2/SHP-mediated repression of respective genes. Modulates glycogen synthesis (inducing phosphorylation of glycogen synthase kinase-3). Modulates glucose-stimulated insulin secretion and is involved in insulin resistance. Involved in intestinal innate immunity. Plays a role in protecting the distal small intestine against bacterial overgrowth and preservation of the epithelial barrier. Down-regulates inflammatory cytokine expression in several types of immune cells including macrophages and mononuclear cells. Mediates transrepression of TLR4-induced cytokine expression; the function seems to require its sumoylation and prevents N-CoR nuclear receptor corepressor clearance from target genes such as IL1B and NOS2. Involved in the TLR9-mediated protective mechanism in intestinal inflammation. Plays a anti-inflammatory role in liver inflammation; proposed to inhibit pro-inflammatory (but not antiapoptotic) NF-kappa-B signaling. In terms of biological role, activates transcription of IBAP and SDC1. This chain is Bile acid receptor (Nr1h4), found in Mus musculus (Mouse).